The following is a 153-amino-acid chain: Peptidyl-prolyl cis-trans isomerase FKBP15-1 (153 aa).

Positions 1 to 25 are cleaved as a signal peptide; it reads MMSSASAMKAVGFLLLLTILTLAYA. The region spanning 52–140 is the PPIase FKBP-type domain; the sequence is GDKIKVHYRG…IFDTELVAVN (89 aa). Residues 150-153 carry the Prevents secretion from ER motif; it reads KNEL.

It belongs to the FKBP-type PPIase family.

It is found in the endoplasmic reticulum lumen. The enzyme catalyses [protein]-peptidylproline (omega=180) = [protein]-peptidylproline (omega=0). Functionally, PPIases accelerate the folding of proteins. It catalyzes the cis-trans isomerization of proline imidic peptide bonds in oligopeptides. The protein is Peptidyl-prolyl cis-trans isomerase FKBP15-1 (FKBP15-1) of Arabidopsis thaliana (Mouse-ear cress).